Here is an 859-residue protein sequence, read N- to C-terminus: Tripartite terminase subunit 1 (859 aa).

A C3H1-type zinc finger spans residues 231-259 (CCICLDELSVTANQGDTIYKRLGYSVCDH). A compositionally biased stretch (basic and acidic residues) spans 512 to 525 (TRPRADKAGGRAED). Positions 512–542 (TRPRADKAGGRAEDGAGDCDDEGYPGAADAT) are disordered. Residue 782 to 789 (FESIFQCG) coordinates ATP.

The protein belongs to the herpesviridae TRM1 protein family. In terms of assembly, associates with TRM2 and TRM3 to form the tripartite terminase complex. Interacts with portal protein.

Its subcellular location is the host nucleus. Component of the molecular motor that translocates viral genomic DNA in empty capsid during DNA packaging. Forms a tripartite terminase complex together with TRM2 and TRM3 in the host cytoplasm. Once the complex reaches the host nucleus, it interacts with the capsid portal vertex. This portal forms a ring in which genomic DNA is translocated into the capsid. TRM1 carries an endonuclease activity that plays an important role for the cleavage of concatemeric viral DNA into unit length genomes. This is Tripartite terminase subunit 1 from Amazona oratrix (yellow-headed parrot).